The primary structure comprises 154 residues: Crossover junction endodeoxyribonuclease RuvC (154 aa).

Catalysis depends on residues Asp-7, Glu-67, and Asp-139. Mg(2+) contacts are provided by Asp-7, Glu-67, and Asp-139.

Belongs to the RuvC family. As to quaternary structure, homodimer which binds Holliday junction (HJ) DNA. The HJ becomes 2-fold symmetrical on binding to RuvC with unstacked arms; it has a different conformation from HJ DNA in complex with RuvA. In the full resolvosome a probable DNA-RuvA(4)-RuvB(12)-RuvC(2) complex forms which resolves the HJ. Mg(2+) is required as a cofactor.

It localises to the cytoplasm. The catalysed reaction is Endonucleolytic cleavage at a junction such as a reciprocal single-stranded crossover between two homologous DNA duplexes (Holliday junction).. In terms of biological role, the RuvA-RuvB-RuvC complex processes Holliday junction (HJ) DNA during genetic recombination and DNA repair. Endonuclease that resolves HJ intermediates. Cleaves cruciform DNA by making single-stranded nicks across the HJ at symmetrical positions within the homologous arms, yielding a 5'-phosphate and a 3'-hydroxyl group; requires a central core of homology in the junction. The consensus cleavage sequence is 5'-(A/T)TT(C/G)-3'. Cleavage occurs on the 3'-side of the TT dinucleotide at the point of strand exchange. HJ branch migration catalyzed by RuvA-RuvB allows RuvC to scan DNA until it finds its consensus sequence, where it cleaves and resolves the cruciform DNA. The sequence is that of Crossover junction endodeoxyribonuclease RuvC from Parasynechococcus marenigrum (strain WH8102).